The chain runs to 520 residues: Serine protease Hip1 (520 aa).

The signal sequence occupies residues 1 to 30; sequence MGMRLSRRDKIARMLLIWAALAAVALVLVG. Cys-31 carries N-palmitoyl cysteine lipidation. Cys-31 carries S-diacylglycerol cysteine lipidation. The AB hydrolase-1 domain occupies 102 to 497; the sequence is GSLVINPGGP…TQHTVVFQGD (396 aa). Ser-228 (nucleophile) is an active-site residue. Asp-463 is an active-site residue. His-490 serves as the catalytic Proton donor.

Belongs to the peptidase S33 family.

The protein localises to the cell envelope. It localises to the cell membrane. Functionally, serine protease that promotes pathogenesis by promoting the processing and the extracellular release of the M.bovis heat-shock protein GroEL2. Its function is as follows. Key immunomodulatory virulence factor, which promotes survival in host macrophages and modulates host immune responses. In Mycobacterium bovis (strain ATCC BAA-935 / AF2122/97), this protein is Serine protease Hip1.